Here is a 111-residue protein sequence, read N- to C-terminus: Urease subunit beta (111 aa).

It belongs to the urease beta subunit family. In terms of assembly, heterotrimer of UreA (gamma), UreB (beta) and UreC (alpha) subunits. Three heterotrimers associate to form the active enzyme.

It is found in the cytoplasm. It catalyses the reaction urea + 2 H2O + H(+) = hydrogencarbonate + 2 NH4(+). The protein operates within nitrogen metabolism; urea degradation; CO(2) and NH(3) from urea (urease route): step 1/1. The polypeptide is Urease subunit beta (Psychrobacter cryohalolentis (strain ATCC BAA-1226 / DSM 17306 / VKM B-2378 / K5)).